The primary structure comprises 140 residues: ATP synthase epsilon chain (140 aa).

The protein belongs to the ATPase epsilon chain family. In terms of assembly, F-type ATPases have 2 components, CF(1) - the catalytic core - and CF(0) - the membrane proton channel. CF(1) has five subunits: alpha(3), beta(3), gamma(1), delta(1), epsilon(1). CF(0) has three main subunits: a, b and c.

It is found in the cell inner membrane. In terms of biological role, produces ATP from ADP in the presence of a proton gradient across the membrane. The polypeptide is ATP synthase epsilon chain (Colwellia maris).